The primary structure comprises 129 residues: Glycine cleavage system H protein (129 aa).

Residues 24-106 form the Lipoyl-binding domain; sequence TVVVGVTSYA…YGDGWLIKVR (83 aa). Lysine 65 carries the post-translational modification N6-lipoyllysine.

Belongs to the GcvH family. In terms of assembly, the glycine cleavage system is composed of four proteins: P, T, L and H. It depends on (R)-lipoate as a cofactor.

Its function is as follows. The glycine cleavage system catalyzes the degradation of glycine. The H protein shuttles the methylamine group of glycine from the P protein to the T protein. The protein is Glycine cleavage system H protein of Gloeobacter violaceus (strain ATCC 29082 / PCC 7421).